We begin with the raw amino-acid sequence, 185 residues long: HTH-type transcriptional regulator PuuR (185 aa).

The segment at methionine 1 to glycine 20 is disordered. Residues leucine 12–phenylalanine 66 form the HTH cro/C1-type domain. Residues glutamine 23–glutamine 42 constitute a DNA-binding region (H-T-H motif). The Cupin type-2 domain maps to phenylalanine 111–serine 178.

It participates in amine and polyamine degradation; putrescine degradation [regulation]. Its function is as follows. Represses puuA, puuD and puuP. In Escherichia coli (strain K12), this protein is HTH-type transcriptional regulator PuuR (puuR).